The following is a 96-amino-acid chain: Ubiquitin-like protein NEDD8-like protein 1 (96 aa).

The interval 75–96 (SQSDNSEKSEKSGKSEKDCILM) is disordered. The segment covering 79–96 (NSEKSEKSGKSEKDCILM) has biased composition (basic and acidic residues).

It belongs to the ubiquitin family.

The sequence is that of Ubiquitin-like protein NEDD8-like protein 1 (nedd8l1) from Dictyostelium discoideum (Social amoeba).